Here is a 1919-residue protein sequence, read N- to C-terminus: Protein TIC 214 (1919 aa).

Transmembrane regions (helical) follow at residues 18–38 (IINSVVVVGLYYGFLTTFSIG), 67–87 (FITGQLMMFISIYYAPLHLAL), 90–110 (PHTITVLALPYLLFHFFWNNH), 127–147 (LSIQCVFLNNLIFQLFNHFIL), 175–195 (VGWLIGHILFMKWVGLVLVWI), and 224–244 (IFSILLFITCVYYLGRIPSPI). Disordered stretches follow at residues 250-375 (KETP…GKEK), 1107-1129 (IKSITKEKKKGTPGIKSSPNKRS), and 1606-1636 (ELKNRNQEEKEPADRGDLGSDAQNQGNRRFV). 5 stretches are compositionally biased toward acidic residues: residues 259-269 (GESEEETDVEI), 278-288 (GESEEETDVEI), 297-307 (GESEEETDVEI), 316-328 (GESEEETDVEIET), and 355-366 (EKEDPDKIDETE). Residues 1107–1117 (IKSITKEKKKG) are compositionally biased toward basic residues. Positions 1606–1623 (ELKNRNQEEKEPADRGDL) are enriched in basic and acidic residues. Positions 1626–1636 (DAQNQGNRRFV) are enriched in polar residues.

Belongs to the TIC214 family. As to quaternary structure, part of the Tic complex.

The protein resides in the plastid. The protein localises to the chloroplast inner membrane. Involved in protein precursor import into chloroplasts. May be part of an intermediate translocation complex acting as a protein-conducting channel at the inner envelope. The polypeptide is Protein TIC 214 (Panax ginseng (Korean ginseng)).